The chain runs to 253 residues: LexA repressor (253 aa).

Residues 1-33 (MTSQGRGTRRGGARGNVRAFPENPADAAGLTPR) are disordered. A DNA-binding region (H-T-H motif) is located at residues 54–74 (VREIGEAVGLTSTSSVAHQLK). Catalysis depends on for autocatalytic cleavage activity residues Ser177 and Lys214.

It belongs to the peptidase S24 family. In terms of assembly, homodimer.

The enzyme catalyses Hydrolysis of Ala-|-Gly bond in repressor LexA.. Its function is as follows. Represses a number of genes involved in the response to DNA damage (SOS response), including recA and lexA. In the presence of single-stranded DNA, RecA interacts with LexA causing an autocatalytic cleavage which disrupts the DNA-binding part of LexA, leading to derepression of the SOS regulon and eventually DNA repair. The sequence is that of LexA repressor from Frankia alni (strain DSM 45986 / CECT 9034 / ACN14a).